The chain runs to 96 residues: Co-chaperonin GroES (96 aa).

It belongs to the GroES chaperonin family. Heptamer of 7 subunits arranged in a ring. Interacts with the chaperonin GroEL.

It localises to the cytoplasm. Its function is as follows. Together with the chaperonin GroEL, plays an essential role in assisting protein folding. The GroEL-GroES system forms a nano-cage that allows encapsulation of the non-native substrate proteins and provides a physical environment optimized to promote and accelerate protein folding. GroES binds to the apical surface of the GroEL ring, thereby capping the opening of the GroEL channel. The protein is Co-chaperonin GroES of Shewanella baltica (strain OS223).